A 306-amino-acid polypeptide reads, in one-letter code: Palmitoyl-protein thioesterase ABHD10, mitochondrial (306 aa).

The transit peptide at 1 to 52 (MAGVGLAAVPAWVPCRRWGLAAVTFGFHHGLSTLLARKTERAPQWLRACRHK) directs the protein to the mitochondrion. The region spanning 78-177 (IIFIPGYISN…KVVALVGVAT (100 aa)) is the AB hydrolase-1 domain. Catalysis depends on charge relay system residues Ser152, Asp249, and His279.

Belongs to the AB hydrolase superfamily.

Its subcellular location is the mitochondrion. The catalysed reaction is S-hexadecanoyl-L-cysteinyl-[protein] + H2O = L-cysteinyl-[protein] + hexadecanoate + H(+). It catalyses the reaction mycophenolic acid O-acyl-beta-D-glucuronide + H2O = mycophenolate + D-glucuronate + H(+). Inhibited by palmostatin-B. Its function is as follows. Acts as an acyl-protein thioesterase that hydrolyzes fatty acids from acylated residues in proteins. Regulates the mitochondrial S-depalmitoylation of the nucleophilic active site residue of peroxiredoxin-5/PRDX5, a key antioxidant protein, therefore modulating mitochondrial antioxidant ability. Also catalyzes the deglucuronidation of mycophenolic acid acyl-glucuronide, an active metabolite of the immunosuppressant drug mycophenolate. The polypeptide is Palmitoyl-protein thioesterase ABHD10, mitochondrial (ABHD10) (Bos taurus (Bovine)).